A 614-amino-acid polypeptide reads, in one-letter code: Threonine--tRNA ligase (614 aa).

The tract at residues M1–I138 is editing domain. The interval E133–S157 is disordered. Over residues E141–S154 the composition is skewed to acidic residues. The interval P200–P495 is catalytic. Zn(2+) contacts are provided by C292, H344, and H466.

It belongs to the class-II aminoacyl-tRNA synthetase family. In terms of assembly, homodimer. Zn(2+) serves as cofactor.

Its subcellular location is the cytoplasm. The enzyme catalyses tRNA(Thr) + L-threonine + ATP = L-threonyl-tRNA(Thr) + AMP + diphosphate + H(+). Catalyzes the attachment of threonine to tRNA(Thr) in a two-step reaction: L-threonine is first activated by ATP to form Thr-AMP and then transferred to the acceptor end of tRNA(Thr). Also edits incorrectly charged L-seryl-tRNA(Thr). This Methanosphaera stadtmanae (strain ATCC 43021 / DSM 3091 / JCM 11832 / MCB-3) protein is Threonine--tRNA ligase.